The following is a 379-amino-acid chain: Transcription termination factor Rho (379 aa).

Residues 1–68 (MTDKYGFLRS…KRIFQINGRF (68 aa)) enclose the Rho RNA-BD domain. ATP is bound by residues 111-116 (GKGQRG), 123-128 (KTGKTT), and Arg-154.

It belongs to the Rho family. As to quaternary structure, homohexamer. The homohexamer assembles into an open ring structure.

In terms of biological role, facilitates transcription termination by a mechanism that involves Rho binding to the nascent RNA, activation of Rho's RNA-dependent ATPase activity, and release of the mRNA from the DNA template. The polypeptide is Transcription termination factor Rho (Karelsulcia muelleri (strain SMDSEM) (Sulcia muelleri)).